The sequence spans 464 residues: DNA primase DnaG (464 aa).

One can recognise a Toprim domain in the interval 200–274; sequence DSIIVVEGRA…DVDYVARAPE (75 aa). Mg(2+) is bound by residues Glu-206, Asp-248, and Asp-250. Over residues 322-332 the composition is skewed to basic and acidic residues; that stretch reads NGREEKVREVK. Residues 322–359 are disordered; the sequence is NGREEKVREVKPPAPAPAPAPAPKPIEKPEPKEREEKI. Residues 333–345 show a composition bias toward pro residues; that stretch reads PPAPAPAPAPAPK. Basic and acidic residues predominate over residues 346–359; it reads PIEKPEPKEREEKI.

It belongs to the archaeal DnaG primase family. As to quaternary structure, forms a ternary complex with MCM helicase and DNA. Component of the archaeal exosome complex. The cofactor is Mg(2+).

It carries out the reaction ssDNA + n NTP = ssDNA/pppN(pN)n-1 hybrid + (n-1) diphosphate.. RNA polymerase that catalyzes the synthesis of short RNA molecules used as primers for DNA polymerase during DNA replication. Also part of the exosome, which is a complex involved in RNA degradation. Acts as a poly(A)-binding protein that enhances the interaction between heteromeric, adenine-rich transcripts and the exosome. This Thermococcus onnurineus (strain NA1) protein is DNA primase DnaG.